Consider the following 394-residue polypeptide: Phosphoglycerate kinase (394 aa).

Residues 21–23 (DFN), Arg36, 59–62 (HLGR), Arg118, and Arg151 contribute to the substrate site. At Ser183 the chain carries Phosphoserine. Lys201 lines the ATP pocket. Residue Thr299 is modified to Phosphothreonine. ATP is bound by residues Glu323 and 350–353 (GGDS).

This sequence belongs to the phosphoglycerate kinase family. In terms of assembly, monomer.

It is found in the cytoplasm. It carries out the reaction (2R)-3-phosphoglycerate + ATP = (2R)-3-phospho-glyceroyl phosphate + ADP. It functions in the pathway carbohydrate degradation; glycolysis; pyruvate from D-glyceraldehyde 3-phosphate: step 2/5. The protein is Phosphoglycerate kinase of Halalkalibacterium halodurans (strain ATCC BAA-125 / DSM 18197 / FERM 7344 / JCM 9153 / C-125) (Bacillus halodurans).